The sequence spans 110 residues: Coiled-coil-helix-coiled-coil-helix domain-containing protein 5 (110 aa).

Met-1 is subject to N-acetylmethionine. CHCH domains lie at 9-52 (ARYC…PIIR) and 55-97 (RQAC…QPPS). Short sequence motifs (cx9C motif) lie at residues 12–22 (CSRELDQYGQC), 34–44 (CHHLKMSIARC), 58–68 (CAEPFEAFEKC), and 79–89 (CAEHMRRFLQC). 4 cysteine pairs are disulfide-bonded: Cys-12–Cys-44, Cys-22–Cys-34, Cys-58–Cys-89, and Cys-68–Cys-79.

In terms of assembly, monomer.

It is found in the mitochondrion intermembrane space. This is Coiled-coil-helix-coiled-coil-helix domain-containing protein 5 (Chchd5) from Mus musculus (Mouse).